The following is a 301-amino-acid chain: Probable alpha-L-glutamate ligase 2 (301 aa).

The ATP-grasp domain occupies 104–287 (LQLLSRKSIG…VADKIIQFIE (184 aa)). ATP contacts are provided by residues Lys-141, 178-179 (EY), Asp-187, and 211-213 (RSN). 3 residues coordinate Mg(2+): Asp-248, Glu-260, and Asn-262. Mn(2+) contacts are provided by Asp-248, Glu-260, and Asn-262.

Belongs to the RimK family. Requires Mg(2+) as cofactor. Mn(2+) is required as a cofactor.

This Shewanella denitrificans (strain OS217 / ATCC BAA-1090 / DSM 15013) protein is Probable alpha-L-glutamate ligase 2.